Consider the following 319-residue polypeptide: Acetyl-coenzyme A carboxylase carboxyl transferase subunit alpha (319 aa).

Residues 36–293 (EVERLKTKLE…HDAFLSELDR (258 aa)) enclose the CoA carboxyltransferase C-terminal domain.

The protein belongs to the AccA family. Acetyl-CoA carboxylase is a heterohexamer composed of biotin carboxyl carrier protein (AccB), biotin carboxylase (AccC) and two subunits each of ACCase subunit alpha (AccA) and ACCase subunit beta (AccD).

The protein localises to the cytoplasm. It catalyses the reaction N(6)-carboxybiotinyl-L-lysyl-[protein] + acetyl-CoA = N(6)-biotinyl-L-lysyl-[protein] + malonyl-CoA. It functions in the pathway lipid metabolism; malonyl-CoA biosynthesis; malonyl-CoA from acetyl-CoA: step 1/1. Component of the acetyl coenzyme A carboxylase (ACC) complex. First, biotin carboxylase catalyzes the carboxylation of biotin on its carrier protein (BCCP) and then the CO(2) group is transferred by the carboxyltransferase to acetyl-CoA to form malonyl-CoA. This Dichelobacter nodosus (strain VCS1703A) protein is Acetyl-coenzyme A carboxylase carboxyl transferase subunit alpha.